Here is a 901-residue protein sequence, read N- to C-terminus: PGC-1 and ERR-induced regulator in muscle protein 1 (901 aa).

Disordered regions lie at residues Q29–S511, S564–G671, and R731–P752. The span at G100–A112 shows a compositional bias: polar residues. A compositionally biased stretch (low complexity) spans G157 to S178. 5 stretches are compositionally biased toward polar residues: residues L267–Q276, D347–P379, E387–P418, E426–P457, and E465–T484. Positions P608–P624 are enriched in low complexity.

The protein resides in the cytoplasm. It localises to the nucleus. Regulates the expression of selective PPARGC1A/B and ESRRA/B/G target genes with roles in glucose and lipid metabolism, energy transfer, contractile function, muscle mitochondrial biogenesis and oxidative capacity. Required for the efficient induction of MT-CO2, MT-CO3, COX4I1, TFB1M, TFB2M, POLRMT and SIRT3 by PPARGC1A. Positively regulates the PPARGC1A/ESRRG-induced expression of CKMT2, TNNI3 and SLC2A4 and negatively regulates the PPARGC1A/ESRRG-induced expression of PDK4. The polypeptide is PGC-1 and ERR-induced regulator in muscle protein 1 (PERM1) (Bos taurus (Bovine)).